The sequence spans 96 residues: Large ribosomal subunit protein bL28 (96 aa).

Residues 1 to 22 show a composition bias toward polar residues; the sequence is MSRSCELTGKGVQSGNNVSHAN. The interval 1–24 is disordered; sequence MSRSCELTGKGVQSGNNVSHANNK.

It belongs to the bacterial ribosomal protein bL28 family.

This Rhizobium meliloti (strain 1021) (Ensifer meliloti) protein is Large ribosomal subunit protein bL28.